We begin with the raw amino-acid sequence, 218 residues long: 3,4-dihydroxy-2-butanone 4-phosphate synthase (218 aa).

D-ribulose 5-phosphate-binding positions include 38-39, Asp-43, 151-155, and Glu-175; these read RE and RRGHT. Glu-39 is a binding site for Mg(2+). Mg(2+) is bound at residue His-154.

The protein belongs to the DHBP synthase family. In terms of assembly, homodimer. Mg(2+) is required as a cofactor. Mn(2+) serves as cofactor.

It catalyses the reaction D-ribulose 5-phosphate = (2S)-2-hydroxy-3-oxobutyl phosphate + formate + H(+). The protein operates within cofactor biosynthesis; riboflavin biosynthesis; 2-hydroxy-3-oxobutyl phosphate from D-ribulose 5-phosphate: step 1/1. Catalyzes the conversion of D-ribulose 5-phosphate to formate and 3,4-dihydroxy-2-butanone 4-phosphate. This chain is 3,4-dihydroxy-2-butanone 4-phosphate synthase, found in Vibrio cholerae serotype O1 (strain ATCC 39541 / Classical Ogawa 395 / O395).